The following is a 768-amino-acid chain: 5-methyltetrahydropteroyltriglutamate--homocysteine methyltransferase (768 aa).

Residues 17-20 and Lys-117 each bind 5-methyltetrahydropteroyltri-L-glutamate; that span reads RELK. L-homocysteine contacts are provided by residues 442–444 and Glu-495; that span reads IGS. Residues 442–444 and Glu-495 each bind L-methionine; that span reads IGS. Residues 526-527 and Trp-572 each bind 5-methyltetrahydropteroyltri-L-glutamate; that span reads RC. An L-homocysteine-binding site is contributed by Asp-610. Residue Asp-610 participates in L-methionine binding. 5-methyltetrahydropteroyltri-L-glutamate is bound at residue Glu-616. Residues His-653, Cys-655, and Glu-677 each contribute to the Zn(2+) site. Catalysis depends on His-706, which acts as the Proton donor. A Zn(2+)-binding site is contributed by Cys-738.

The protein belongs to the vitamin-B12 independent methionine synthase family. It depends on Zn(2+) as a cofactor.

It catalyses the reaction 5-methyltetrahydropteroyltri-L-glutamate + L-homocysteine = tetrahydropteroyltri-L-glutamate + L-methionine. It functions in the pathway amino-acid biosynthesis; L-methionine biosynthesis via de novo pathway; L-methionine from L-homocysteine (MetE route): step 1/1. In terms of biological role, catalyzes the transfer of a methyl group from 5-methyltetrahydrofolate to homocysteine resulting in methionine formation. This Bifidobacterium adolescentis (strain ATCC 15703 / DSM 20083 / NCTC 11814 / E194a) protein is 5-methyltetrahydropteroyltriglutamate--homocysteine methyltransferase.